The sequence spans 114 residues: Large ribosomal subunit protein uL18 (114 aa).

It belongs to the universal ribosomal protein uL18 family. Part of the 50S ribosomal subunit; part of the 5S rRNA/L5/L18/L25 subcomplex. Contacts the 5S and 23S rRNAs.

Its function is as follows. This is one of the proteins that bind and probably mediate the attachment of the 5S RNA into the large ribosomal subunit, where it forms part of the central protuberance. The sequence is that of Large ribosomal subunit protein uL18 from Azobacteroides pseudotrichonymphae genomovar. CFP2.